Here is a 158-residue protein sequence, read N- to C-terminus: Chromobox protein homolog 7 (158 aa).

Residues 11–69 (FAVESIRKKRVRKGKVEYLVKWKGWPPKYSTWEPEEHILDPRLVMAYEEKEERDRASGY) form the Chromo domain. Residues 60–127 (KEERDRASGY…WTPTLPSSEV (68 aa)) are disordered. Residues 68–78 (GYRKRGPKPRR) are compositionally biased toward basic residues.

As to quaternary structure, component of a PRC1-like complex. Distinct PRC1-like core complexes are composed of a RING1 subunit (RING1B or RING1A), one of the six PCGF proteins (PCGF1-6), one PHC protein (PHC1-3) and one of the CBX proteins (CBX2, CBX4, CBX6, CBX7 or CBX8). The composition of the PRC1 complex may differ between the PRC1 complex in pluripotent embryonic stem cells containing RNF2, CBX7 and PCGF2, and the PRC1 complex in differentiating cells containing RNF2, CBX2, CBX4 and BMI1. Interacts with RING1. Interacts with RNF2, PHC1 and PCGF2. Interacts (via chromodomain) with histone H3K9Me3 and H3K27me3. Interacts with H3K9Me2 and H4K20Me1. Interacts (via chromodomain) with single-stranded and double-stranded RNA; RNA binding seems to be required for the localization to chromatin. Interacts with PCGF1, PCGF3, PCGF5 and PCGF6. Expressed in embryonic stem cells.

Its subcellular location is the nucleus. The protein resides in the chromosome. Component of a Polycomb group (PcG) multiprotein PRC1-like complex, a complex class required to maintain the transcriptionally repressive state of many genes, including Hox genes, throughout development. PcG PRC1 complex acts via chromatin remodeling and modification of histones; it mediates monoubiquitination of histone H2A 'Lys-119', rendering chromatin heritably changed in its expressibility. Promotes histone H3 trimethylation at 'Lys-9' (H3K9me3). Binds to histone H3 trimethylated at 'Lys-9' (H3K9me3) or at 'Lys-27' (H3K27me3). Trimethylation at 'Lys-27' (H3K27me3) is important for chromatin recruitment. May possibly also bind trimethylated lysine residues in other proteins (in vitro). Binds non-coding, single-stranded RNA and double-stranded RNA. Plays a role in the timely repression of differentiation-specific genes in pluripotent embryonic stem cells to maintain the undifferentiated state. Regulator of cellular lifespan by maintaining the repression of CDKN2A, but not by inducing telomerase activity. The polypeptide is Chromobox protein homolog 7 (Cbx7) (Mus musculus (Mouse)).